Consider the following 186-residue polypeptide: Ribosome-recycling factor (186 aa).

The protein belongs to the RRF family.

Its subcellular location is the cytoplasm. Its function is as follows. Responsible for the release of ribosomes from messenger RNA at the termination of protein biosynthesis. May increase the efficiency of translation by recycling ribosomes from one round of translation to another. This Leptothrix cholodnii (strain ATCC 51168 / LMG 8142 / SP-6) (Leptothrix discophora (strain SP-6)) protein is Ribosome-recycling factor.